The chain runs to 395 residues: Yellow-related salivary protein M35 (395 aa).

The N-terminal stretch at 1–18 (MKLILTVLAFLSLQVALS) is a signal peptide.

This sequence belongs to the major royal jelly protein family. Salivary gland (at protein level).

The protein localises to the secreted. In terms of biological role, probably modulates blood feeding of sand flies on vertebrate species by binding and sequestering different mediators involved in the host response. Functions as a chemoattractant for host neutrophils; likely acts through a G-protein-coupled receptor and effect is dependent on calcium influx and phosphatidylinositol 3-kinases (PI3K) activity. Its function is as follows. (Microbial infection) Probably enhances infection caused by Leishmania species in the host through augmentation of host neutrophil recruitment into the skin. This is Yellow-related salivary protein M35 from Phlebotomus duboscqi (Sandfly).